Consider the following 485-residue polypeptide: P2X purinoceptor 2 (485 aa).

At 1-43 (MAAAQPRLPAGAAMVRRLARGCWSAFWDYETPKVIVVRNRRLG) the chain is on the cytoplasmic side. 6 disulfide bridges follow: Cys-22/Cys-443, Cys-126/Cys-177, Cys-137/Cys-160, Cys-143/Cys-171, Cys-227/Cys-237, and Cys-271/Cys-280. Residues 44–64 (FVHRMVQLLILLYFVWYVFIV) traverse the membrane as a helical segment. The Extracellular portion of the chain corresponds to 65–339 (QKSYQDSETG…IVHGQAGKFS (275 aa)). ATP contacts are provided by Lys-82 and Lys-84. N-linked (GlcNAc...) asparagine glycosylation occurs at Asn-195. Thr-197 provides a ligand contact to ATP. The N-linked (GlcNAc...) asparagine glycan is linked to Asn-252. ATP-binding residues include Ser-297, Asn-301, and Arg-303. The N-linked (GlcNAc...) asparagine glycan is linked to Asn-311. Residue Lys-321 participates in ATP binding. The interval 322-335 (AYGIRIDVIVHGQA) is pore-forming motif. Residues 340-360 (LIPTIINLATALTSIGVGSFL) traverse the membrane as a helical segment. Over 361-485 (CDWILLTFMN…STDPKGLAQL (125 aa)) the chain is Cytoplasmic. Residues 406–485 (PPPSHYSQDQ…STDPKGLAQL (80 aa)) are disordered. The segment covering 420–436 (PSGEGPALGEGAELPLA) has biased composition (low complexity). Polar residues predominate over residues 469 to 478 (PSQQDSTSTD).

It belongs to the P2X receptor family. As to quaternary structure, homotrimer and heterotrimer; functional P2XRs are organized as homomeric and heteromeric trimers. Homotrimer. Forms heterotrimer with P2XR1. Forms heterotrimer with P2XR3. Forms heterotrimer with P2XR6.

The protein localises to the cell membrane. The catalysed reaction is Ca(2+)(in) = Ca(2+)(out). The enzyme catalyses K(+)(in) = K(+)(out). It carries out the reaction Na(+)(in) = Na(+)(out). Its activity is regulated as follows. Fast activation by external ATP. Exhibits slow desensitization during prolonged ATP activation. Not sensitive to the ATP agonist:alpha/beta-methylene-ATP. Functionally, ATP-gated nonselective transmembrane cation channel permeable to potassium, sodium and calcium. Activation by extracellular ATP induces a variety of cellular responses, such as excitatory postsynaptic responses in sensory neurons, neuromuscular junctions (NMJ) formation, hearing, perception of taste and peristalsis. In the inner ear, regulates sound transduction and auditory neurotransmission, outer hair cell electromotility, inner ear gap junctions, and K(+) recycling. Mediates synaptic transmission between neurons and from neurons to smooth muscle. This chain is P2X purinoceptor 2 (P2rx2), found in Mus musculus (Mouse).